The following is an 859-amino-acid chain: DNA mismatch repair protein MutS (859 aa).

Residue 618–625 (GPNMGGKS) coordinates ATP.

The protein belongs to the DNA mismatch repair MutS family.

In terms of biological role, this protein is involved in the repair of mismatches in DNA. It is possible that it carries out the mismatch recognition step. This protein has a weak ATPase activity. In Shewanella halifaxensis (strain HAW-EB4), this protein is DNA mismatch repair protein MutS.